Reading from the N-terminus, the 554-residue chain is Hydroxylamine reductase (554 aa).

The [2Fe-2S] cluster site is built by Cys-3, Cys-6, Cys-18, and Cys-25. Hybrid [4Fe-2O-2S] cluster is bound by residues His-252, Glu-276, Cys-320, Cys-408, Cys-436, Cys-461, Glu-495, and Lys-497. A Cysteine persulfide modification is found at Cys-408.

The protein belongs to the HCP family. Requires [2Fe-2S] cluster as cofactor. Hybrid [4Fe-2O-2S] cluster is required as a cofactor.

It localises to the cytoplasm. The catalysed reaction is A + NH4(+) + H2O = hydroxylamine + AH2 + H(+). Catalyzes the reduction of hydroxylamine to form NH(3) and H(2)O. The sequence is that of Hydroxylamine reductase from Shewanella oneidensis (strain ATCC 700550 / JCM 31522 / CIP 106686 / LMG 19005 / NCIMB 14063 / MR-1).